Consider the following 719-residue polypeptide: MSDISVEKLTELEAAAELERLARAIAHHDELYHAKDRPEISDAAYDALKRRNEAIEAHFPALVRDDSPSRRVGAAPALATFAPVVHARPMLSLDNAFSDEDVRDFVGSVYRFLGQLPDDSIAFTAEPKIDGLSMSIRYENGILVSGATRGDGTTGENVTANIRTIAEIPNRLPAGAPAVVEVRGEVYMAKSDFLTLNAQMEAEGKQTYVNPRNTAAGSLRQLDAKVTASRKLRFFAYAWGEMSDMPADTQLGMVEVFRQWGFPVNPLMKRFNSVDGLLAHYRAIGMERPTLDYDIDGVVYKVDRLDLQTRLGFRSRSPRWAIAHKFPAEQALTILRGIDIQVGRTGALTPVARLEPITVGGVVVTNATLHNEDYIKGIGQKGEPIREGRDIRIGDSVIVQRAGDVIPQIVDVVLEEGKKRGEPYQFPHVCPACGSHAVREEGEAVRRCTGGLICPAQAVERIRHFVSRNAFDIEGLGEKQVEFFFNAEDPALCIRSPADIFTLKKRQENSLTKLQNIEGFGATSVKKLYDAIDARREIALHRFLFGLGIRHVGEVNAKRLARAYLSYAAFEKAALEAVPPKEGDRTDKGSEAWQDMLAVEGIGSIVAEAVVDFYGEPHNREVLAALLAEVTPLDEEARVATGSPVEGKTVVFTGSLERMSRDEAKAMAERHGAKTAGSVSKKTDLVVAGPGAGSKLAKATELGIEVINEDDWFKLVGED.

Residues 42 to 46 (DAAYD), 92 to 93 (SL), and E126 contribute to the NAD(+) site. K128 functions as the N6-AMP-lysine intermediate in the catalytic mechanism. NAD(+) is bound by residues R149, E185, K301, and K325. Residues C430, C433, C448, and C454 each contribute to the Zn(2+) site. Residues 640–719 (ATGSPVEGKT…DDWFKLVGED (80 aa)) form the BRCT domain.

This sequence belongs to the NAD-dependent DNA ligase family. LigA subfamily. Requires Mg(2+) as cofactor. Mn(2+) serves as cofactor.

The catalysed reaction is NAD(+) + (deoxyribonucleotide)n-3'-hydroxyl + 5'-phospho-(deoxyribonucleotide)m = (deoxyribonucleotide)n+m + AMP + beta-nicotinamide D-nucleotide.. DNA ligase that catalyzes the formation of phosphodiester linkages between 5'-phosphoryl and 3'-hydroxyl groups in double-stranded DNA using NAD as a coenzyme and as the energy source for the reaction. It is essential for DNA replication and repair of damaged DNA. The protein is DNA ligase of Brucella suis biovar 1 (strain 1330).